The sequence spans 210 residues: Translation initiation factor IF-3 (210 aa).

The tract at residues 169-210 (APKQAPAPKKERTEESAEKAGSAGETEPVPAASAAAEAPANV) is disordered. Residues 176 to 186 (PKKERTEESAE) show a composition bias toward basic and acidic residues. Residues 187-210 (KAGSAGETEPVPAASAAAEAPANV) show a composition bias toward low complexity.

This sequence belongs to the IF-3 family. In terms of assembly, monomer.

The protein localises to the cytoplasm. Functionally, IF-3 binds to the 30S ribosomal subunit and shifts the equilibrium between 70S ribosomes and their 50S and 30S subunits in favor of the free subunits, thus enhancing the availability of 30S subunits on which protein synthesis initiation begins. This chain is Translation initiation factor IF-3, found in Deinococcus deserti (strain DSM 17065 / CIP 109153 / LMG 22923 / VCD115).